Reading from the N-terminus, the 428-residue chain is MAIIEQVGAREILDSRGNPTVEVEVALEDGTLTRAAVPSGASTGEHEAVELRDGDAERYGGKGVEKAVEAVLDEIGPELAGVDAIEQRVVDQKLVDLDGTPDKSRLGANAILGVSLAVAKAAAESVGLELFRYVGGPNAHVLPVPMMNILNGGAHADTGVDVQEFMIAPIGADSFSEAVRWGAETYHSLKSVLKAKGLATGLGDEGGFAPDLPSNREALDLIASAIEKAGYKLGRDIVLALDVAATEFYRDGAYHFEGSKRSAEQMAGYYGELLDAYPLVSIEDPLSEDDWDGWVRLTSEIGERVQLVGDDLFVTNPERLEEGISRRAGNALLVKVNQIGTLSETLDAVHLATSCGYKSMMSHRSGETEDTTIADLAVATGCGQIKTGAPARSERVAKYNQLLRIEETLGDAARYAGELAFPRFTPEA.

Position 163 (glutamine 163) interacts with (2R)-2-phosphoglycerate. The Proton donor role is filled by glutamate 205. Positions 242, 283, and 310 each coordinate Mg(2+). (2R)-2-phosphoglycerate-binding residues include lysine 335, arginine 364, serine 365, and lysine 386. The active-site Proton acceptor is the lysine 335.

It belongs to the enolase family. Mg(2+) is required as a cofactor.

The protein resides in the cytoplasm. Its subcellular location is the secreted. The protein localises to the cell surface. It catalyses the reaction (2R)-2-phosphoglycerate = phosphoenolpyruvate + H2O. Its pathway is carbohydrate degradation; glycolysis; pyruvate from D-glyceraldehyde 3-phosphate: step 4/5. Its function is as follows. Catalyzes the reversible conversion of 2-phosphoglycerate (2-PG) into phosphoenolpyruvate (PEP). It is essential for the degradation of carbohydrates via glycolysis. The sequence is that of Enolase from Saccharopolyspora erythraea (strain ATCC 11635 / DSM 40517 / JCM 4748 / NBRC 13426 / NCIMB 8594 / NRRL 2338).